The chain runs to 427 residues: Extracellular superoxide dismutase [Cu-Zn] 2 (427 aa).

Residues 1 to 20 form the signal peptide; the sequence is MNKLIISLLIVLSAISIISA. Topologically, residues 21–406 are extracellular; it reads DYQYGYCKFG…PTETSQPGTS (386 aa). N-linked (GlcNAc...) asparagine glycans are attached at residues Asn-38, Asn-57, Asn-81, Asn-190, and Asn-218. Cu cation is bound by residues His-257, His-259, and His-275. Residues His-275 and His-283 each coordinate Zn(2+). A glycan (N-linked (GlcNAc...) asparagine) is linked at Asn-288. Zn(2+) is bound by residues His-292 and Asp-295. His-331 contributes to the Cu cation binding site. Asn-376 carries an N-linked (GlcNAc...) asparagine glycan. Residues 381-404 form a disordered region; that stretch reads GESTIEPSPTPSTTPTPTETSQPG. Over residues 395–404 the composition is skewed to low complexity; the sequence is PTPTETSQPG. The chain crosses the membrane as a helical span at residues 407–426; sequence SYLAPFFVLILSSLISVILI. Leu-427 is a topological domain (cytoplasmic).

The protein belongs to the Cu-Zn superoxide dismutase family. It depends on Cu cation as a cofactor. Zn(2+) serves as cofactor.

It localises to the cell membrane. The enzyme catalyses 2 superoxide + 2 H(+) = H2O2 + O2. In terms of biological role, protect the extracellular space from toxic effect of reactive oxygen intermediates by converting superoxyde radicals into hydrogen peroxyde and oxygen. This chain is Extracellular superoxide dismutase [Cu-Zn] 2 (sodB), found in Dictyostelium discoideum (Social amoeba).